A 325-amino-acid polypeptide reads, in one-letter code: Tetraacyldisaccharide 4'-kinase (325 aa).

53–60 (SVGGNGKT) lines the ATP pocket.

This sequence belongs to the LpxK family.

It catalyses the reaction a lipid A disaccharide + ATP = a lipid IVA + ADP + H(+). It functions in the pathway glycolipid biosynthesis; lipid IV(A) biosynthesis; lipid IV(A) from (3R)-3-hydroxytetradecanoyl-[acyl-carrier-protein] and UDP-N-acetyl-alpha-D-glucosamine: step 6/6. Functionally, transfers the gamma-phosphate of ATP to the 4'-position of a tetraacyldisaccharide 1-phosphate intermediate (termed DS-1-P) to form tetraacyldisaccharide 1,4'-bis-phosphate (lipid IVA). The sequence is that of Tetraacyldisaccharide 4'-kinase from Pasteurella multocida (strain Pm70).